Consider the following 109-residue polypeptide: Nascent polypeptide-associated complex protein (109 aa).

One can recognise an NAC-A/B domain in the interval Pro-3 to Ile-70.

It belongs to the NAC-alpha family. In terms of assembly, homodimer. Interacts with the ribosome. Binds ribosomal RNA.

Contacts the emerging nascent chain on the ribosome. This Archaeoglobus fulgidus (strain ATCC 49558 / DSM 4304 / JCM 9628 / NBRC 100126 / VC-16) protein is Nascent polypeptide-associated complex protein.